Reading from the N-terminus, the 131-residue chain is D-ribose pyranase (131 aa).

The active-site Proton donor is the H20. Residues D28, H98, and 120-122 each bind substrate; that span reads YAN.

The protein belongs to the RbsD / FucU family. RbsD subfamily. As to quaternary structure, homodecamer.

It localises to the cytoplasm. It carries out the reaction beta-D-ribopyranose = beta-D-ribofuranose. The protein operates within carbohydrate metabolism; D-ribose degradation; D-ribose 5-phosphate from beta-D-ribopyranose: step 1/2. In terms of biological role, catalyzes the interconversion of beta-pyran and beta-furan forms of D-ribose. This is D-ribose pyranase from Bacillus cereus (strain ATCC 10987 / NRS 248).